The chain runs to 47 residues: Delta-actitoxin-Cgg1b (47 aa).

Position 3 is a hydroxyproline (P3). Cystine bridges form between C4–C44, C6–C34, and C27–C45.

Belongs to the sea anemone sodium channel inhibitory toxin family. Type I subfamily.

It localises to the secreted. It is found in the nematocyst. Binds voltage-dependently at site 3 of sodium channels (Nav) and inhibits the inactivation, thereby blocking neuronal transmission. This chain is Delta-actitoxin-Cgg1b, found in Condylactis gigantea (Giant Caribbean anemone).